A 152-amino-acid polypeptide reads, in one-letter code: Ribosomal RNA large subunit methyltransferase H (152 aa).

S-adenosyl-L-methionine contacts are provided by residues leucine 68, glycine 100, and leucine 119 to tryptophan 124.

Belongs to the RNA methyltransferase RlmH family. As to quaternary structure, homodimer.

It localises to the cytoplasm. It catalyses the reaction pseudouridine(1915) in 23S rRNA + S-adenosyl-L-methionine = N(3)-methylpseudouridine(1915) in 23S rRNA + S-adenosyl-L-homocysteine + H(+). Its function is as follows. Specifically methylates the pseudouridine at position 1915 (m3Psi1915) in 23S rRNA. In Rhodospirillum rubrum (strain ATCC 11170 / ATH 1.1.1 / DSM 467 / LMG 4362 / NCIMB 8255 / S1), this protein is Ribosomal RNA large subunit methyltransferase H.